Consider the following 133-residue polypeptide: Transcriptional regulator MraZ (133 aa).

2 consecutive SpoVT-AbrB domains span residues 5 to 47 and 76 to 119; these read TYEH…SKDD and TVEI…SKNK.

Belongs to the MraZ family. Forms oligomers.

Its subcellular location is the cytoplasm. The protein localises to the nucleoid. This is Transcriptional regulator MraZ from Mycoplasma mycoides subsp. mycoides SC (strain CCUG 32753 / NCTC 10114 / PG1).